We begin with the raw amino-acid sequence, 253 residues long: MAASGESGASGGGGSTEEAFMTFYSEVKQIEKRDSVLTSKNQIERLTRPGSSYFNLNPFEVLQIDPEVTDEEIKKRFRQLSILVHPDKNQDDADRAQKAFEAVDKAYKLLLDQEQKKRALDVIQAGKEYVEHTVKERKKQLKKEGKPTNVEEDDPELFKQAVYKQTMKLFAELEIKRKEREAKEMHERKRQREEEIEAQEKAKREREWQKNFEESRDGRVDSWRNFQANTKGKKEKKNRTFLRPPKVKMEQRE.

At alanine 2 the chain carries N-acetylalanine. Residue serine 35 is modified to Phosphoserine. The J domain occupies 57–124 (NPFEVLQIDP…QKKRALDVIQ (68 aa)). N6-acetyllysine is present on lysine 146. Over residues 181–222 (EAKEMHERKRQREEEIEAQEKAKREREWQKNFEESRDGRVDS) the composition is skewed to basic and acidic residues. Residues 181 to 253 (EAKEMHERKR…PPKVKMEQRE (73 aa)) form a disordered region. 2 consecutive short sequence motifs (nuclear localization signal) follow at residues 189-192 (KRQR) and 203-206 (KRER). Serine 222 bears the Phosphoserine mark. Basic residues predominate over residues 231–240 (KGKKEKKNRT). Residues 232 to 253 (GKKEKKNRTFLRPPKVKMEQRE) form an essential for polyglutamine aggregation suppression region.

As to quaternary structure, interacts with SRPK1. Interacts with HSP70 (HSPA1A or HSPA1B).

The protein resides in the nucleus. Suppresses polyglutamine (polyQ) aggregation of ATXN3 in neuronal cells. In Mus musculus (Mouse), this protein is DnaJ homolog subfamily C member 8 (Dnajc8).